A 931-amino-acid polypeptide reads, in one-letter code: MTTGFLQKIFGSRNQRLVKQYQKTVETINALETQIEQLTDDQLRGKTDEFRQRVAAGESLDKLLPEAFAVCREASRRVLKMRHFDVQLIGGMVLHYGKIAEMRTGEGKTLVATLPVYLNALAGRGVHVVTVNDYLAQRDAEWMARLYNFLGLSVGINLSGMEHEQKQQAYASDITYGTNNEFGFDYLRDNMVYETEARVQRALNFAVVDEVDSILIDEARTPLIISGQAEDHTELYVRMNALPPLLERQIGEEKADGTGVEKPGDYTLDEKSRQVFLTESGHEKAERLLAEWGLIGEGESLYAPQNITLMHHVYAALRAHTLFYKDQHYVVQNGEVVIVDEFTGRLMAGRRWSDGLHQAVEAKEHVKIQSENQTLASITFQNYFRMYAKLAGMTGTADTEAYEFNEIYGLETVVIPTNRPPKRIDKQDQIYKTAKERYDAVIRDIRECYERGQPVLVGTTSIENSELLSHLLKQAGLPHEVLNAKQHEREAAIVAEAGRPKRITIATNMAGRGTDIVLGGNAEKQAAFIEADEAIPADEKARRIKQLHDEWETLHEQVKAAGGLHIIGTERHESRRIDNQLRGRAGRQGDPGSSRFYLSLDDPLLRIFAGDRVRSIMDRLKMPEGEAIEAGIVTRSIESAQRKVEARNFDIRKQLLEYDDVSNDQRKVIYQQRNELLEAHDITETISAMRHGVITEVVRQFVPEGSIEEQWDVPELEEALRNDWQLDLAIQEMVNESSSITADEILDAVTTAADEQYEAKVAMVGRESFSAFERSVMLQTVDRLWREHLAALDHLRQGIHLRGYAQKNPKQEYKREAFELFAAMLDAIKQEVTRIVMNVQIQSPEQLEEAAEQIEERTGHLENVEYQHADYAESGAPVANVAAATAATATADMVGSAMTHGHAGELPKVGRNDPCPCGSGKKYKQCHGKLS.

ATP contacts are provided by residues Gln87, 105–109 (GEGKT), and Asp515. Residues Cys915, Cys917, Cys926, and His927 each coordinate Zn(2+).

The protein belongs to the SecA family. As to quaternary structure, monomer and homodimer. Part of the essential Sec protein translocation apparatus which comprises SecA, SecYEG and auxiliary proteins SecDF-YajC and YidC. Zn(2+) is required as a cofactor.

It localises to the cell inner membrane. The protein resides in the cytoplasm. The enzyme catalyses ATP + H2O + cellular proteinSide 1 = ADP + phosphate + cellular proteinSide 2.. Functionally, part of the Sec protein translocase complex. Interacts with the SecYEG preprotein conducting channel. Has a central role in coupling the hydrolysis of ATP to the transfer of proteins into and across the cell membrane, serving both as a receptor for the preprotein-SecB complex and as an ATP-driven molecular motor driving the stepwise translocation of polypeptide chains across the membrane. This chain is Protein translocase subunit SecA, found in Burkholderia ambifaria (strain ATCC BAA-244 / DSM 16087 / CCUG 44356 / LMG 19182 / AMMD) (Burkholderia cepacia (strain AMMD)).